The primary structure comprises 43 residues: MGFLTDFFSNINFETIAQLTMLAMVLIAGPVVIVLLALQGGDL.

A helical membrane pass occupies residues 16 to 36 (IAQLTMLAMVLIAGPVVIVLL).

The protein belongs to the Psb30/Ycf12 family. PSII is composed of 1 copy each of membrane proteins PsbA, PsbB, PsbC, PsbD, PsbE, PsbF, PsbH, PsbI, PsbJ, PsbK, PsbL, PsbM, PsbT, PsbX, PsbY, PsbZ, Psb30/Ycf12, peripheral proteins PsbO, CyanoQ (PsbQ), PsbU, PsbV and a large number of cofactors. It forms dimeric complexes.

Its subcellular location is the cellular thylakoid membrane. A core subunit of photosystem II (PSII), probably helps stabilize the reaction center. The polypeptide is Photosystem II reaction center protein Psb30 (Trichodesmium erythraeum (strain IMS101)).